Consider the following 60-residue polypeptide: MAHHEEQHGGHHHHHHHTHHHHYHGGEHHHHHHSSHHEEGCCSTSDSHHQEEGCCHGHHE.

A disordered region spans residues 1 to 60; sequence MAHHEEQHGGHHHHHHHTHHHHYHGGEHHHHHHSSHHEEGCCSTSDSHHQEEGCCHGHHE. Residues 10-35 are compositionally biased toward basic residues; sequence GHHHHHHHTHHHHYHGGEHHHHHHSS. A compositionally biased stretch (basic and acidic residues) spans 36-60; the sequence is HHEEGCCSTSDSHHQEEGCCHGHHE. Tandem repeats lie at residues 38–42 and 51–55. The segment at 38-55 is 2 X 5 AA repeats of E-E-G-C-C; that stretch reads EEGCCSTSDSHHQEEGCC.

Functionally, strongly binds nickel and zinc. Binds other metals less strongly: cobalt &gt; copper &gt; cadmium &gt; manganese. May act to increase, or at least to preserve, urease activity. Exact function is still unknown. The polypeptide is Histidine-rich metal-binding polypeptide (hpn) (Helicobacter pylori (strain J99 / ATCC 700824) (Campylobacter pylori J99)).